Here is a 293-residue protein sequence, read N- to C-terminus: HTH-type transcriptional regulator HdfR (293 aa).

Residues 1–58 (MDTELLKTFLEVSRTRHFGRAAESLYLTQSAVSFRIRQLENQLGANLFTRHRNNIRLT) form the HTH lysR-type domain. Positions 18-37 (FGRAAESLYLTQSAVSFRIR) form a DNA-binding region, H-T-H motif.

It belongs to the LysR transcriptional regulatory family.

Functionally, negatively regulates the transcription of the flagellar master operon flhDC by binding to the upstream region of the operon. This Yersinia enterocolitica serotype O:8 / biotype 1B (strain NCTC 13174 / 8081) protein is HTH-type transcriptional regulator HdfR.